Reading from the N-terminus, the 113-residue chain is Nucleoid-associated protein P9303_00241 (113 aa).

The interval 90-113 is disordered; the sequence is TTTMKEQMEELTGGLNLNLPGMSD.

The protein belongs to the YbaB/EbfC family. Homodimer.

Its subcellular location is the cytoplasm. It is found in the nucleoid. Functionally, binds to DNA and alters its conformation. May be involved in regulation of gene expression, nucleoid organization and DNA protection. The chain is Nucleoid-associated protein P9303_00241 from Prochlorococcus marinus (strain MIT 9303).